The following is a 421-amino-acid chain: Putative NBPF family member NBPF7 (421 aa).

Residues 87–143 are a coiled coil; sequence IKSMLREELQFKEEKLAEQLKQAEELRQYKVLVHSQERELIQLREKLREGRDASHSL. Disordered regions lie at residues 179-251, 312-334, and 402-421; these read VHKL…KITS, EKEV…HDVS, and YNSK…FTED. Olduvai domains follow at residues 190–279 and 280–391; these read EDEN…NILL and ENQN…RMSQ. Residues 194–217 show a composition bias toward basic and acidic residues; that stretch reads DKTKELDKVQESPAPREEQKAEEK. The span at 230 to 243 shows a compositional bias: polar residues; it reads TYSNSHGPSDSNPP. Over residues 312 to 333 the composition is skewed to basic and acidic residues; sequence EKEVLQDSPEERVTTSCSDHDV. The segment covering 403 to 421 has biased composition (polar residues); the sequence is NSKPSSIPNTTLQGSFTED.

The protein belongs to the NBPF family.

Its subcellular location is the cytoplasm. The polypeptide is Putative NBPF family member NBPF7 (Homo sapiens (Human)).